Consider the following 137-residue polypeptide: MSVERTLILVKPDGVSRGLVGEVVGRLERKGLTLVALELRTLERSVAETHYGEHASKPFFGELVDFITSGPLVALVAEGPRAVEASRGLIGATDPVKAAPGSLRGDYALEIGQNLVHGSDSPESAKREIDLFFPGLS.

Residues lysine 11, phenylalanine 59, arginine 87, threonine 93, arginine 104, and asparagine 114 each coordinate ATP. Catalysis depends on histidine 117, which acts as the Pros-phosphohistidine intermediate.

Belongs to the NDK family. In terms of assembly, homotetramer. The cofactor is Mg(2+).

It is found in the cytoplasm. The enzyme catalyses a 2'-deoxyribonucleoside 5'-diphosphate + ATP = a 2'-deoxyribonucleoside 5'-triphosphate + ADP. The catalysed reaction is a ribonucleoside 5'-diphosphate + ATP = a ribonucleoside 5'-triphosphate + ADP. Its function is as follows. Major role in the synthesis of nucleoside triphosphates other than ATP. The ATP gamma phosphate is transferred to the NDP beta phosphate via a ping-pong mechanism, using a phosphorylated active-site intermediate. The chain is Nucleoside diphosphate kinase from Frankia casuarinae (strain DSM 45818 / CECT 9043 / HFP020203 / CcI3).